A 209-amino-acid chain; its full sequence is Small ribosomal subunit protein uS4 (209 aa).

The tract at residues serine 23–aspartate 46 is disordered. The S4 RNA-binding domain maps to cysteine 93 to leucine 156.

It belongs to the universal ribosomal protein uS4 family. Part of the 30S ribosomal subunit. Contacts protein S5. The interaction surface between S4 and S5 is involved in control of translational fidelity.

Functionally, one of the primary rRNA binding proteins, it binds directly to 16S rRNA where it nucleates assembly of the body of the 30S subunit. With S5 and S12 plays an important role in translational accuracy. This Chlamydia caviae (strain ATCC VR-813 / DSM 19441 / 03DC25 / GPIC) (Chlamydophila caviae) protein is Small ribosomal subunit protein uS4.